We begin with the raw amino-acid sequence, 404 residues long: CCA-adding enzyme (404 aa).

The ATP site is built by Gly32 and Arg35. Positions 32 and 35 each coordinate CTP. 2 residues coordinate Mg(2+): Asp45 and Asp47. ATP-binding residues include Arg116, Asp159, Arg162, Arg165, and Arg168. 5 residues coordinate CTP: Arg116, Asp159, Arg162, Arg165, and Arg168.

The protein belongs to the tRNA nucleotidyltransferase/poly(A) polymerase family. Bacterial CCA-adding enzyme type 3 subfamily. As to quaternary structure, homodimer. Mg(2+) serves as cofactor.

The catalysed reaction is a tRNA precursor + 2 CTP + ATP = a tRNA with a 3' CCA end + 3 diphosphate. It carries out the reaction a tRNA with a 3' CCA end + 2 CTP + ATP = a tRNA with a 3' CCACCA end + 3 diphosphate. Catalyzes the addition and repair of the essential 3'-terminal CCA sequence in tRNAs without using a nucleic acid template. Adds these three nucleotides in the order of C, C, and A to the tRNA nucleotide-73, using CTP and ATP as substrates and producing inorganic pyrophosphate. tRNA 3'-terminal CCA addition is required both for tRNA processing and repair. Also involved in tRNA surveillance by mediating tandem CCA addition to generate a CCACCA at the 3' terminus of unstable tRNAs. While stable tRNAs receive only 3'-terminal CCA, unstable tRNAs are marked with CCACCA and rapidly degraded. The protein is CCA-adding enzyme of Ligilactobacillus salivarius (strain UCC118) (Lactobacillus salivarius).